The chain runs to 23 residues: Apolipophorin-3 (23 aa).

It belongs to the insect apolipophorin-3 family. Equilibrium between a soluble monomer and a bound lipoprotein form. Apolipophorin-3 associates with lipophorin during lipid loading until each particle contains 9 or 14 molecules of apolipophorin-3. Hemolymph.

The protein localises to the secreted. In terms of biological role, assists in the loading of diacylglycerol, generated from triacylglycerol stores in the fat body through the action of adipokinetic hormone, into lipophorin, the hemolymph lipoprotein. It increases the lipid carrying capacity of lipophorin by covering the expanding hydrophobic surface resulting from diacylglycerol uptake. It thus plays a critical role in the transport of lipids during flight in several species of insects. The sequence is that of Apolipophorin-3 from Melanoplus sanguinipes (Migratory grasshopper).